The following is a 259-amino-acid chain: Cytosolic Fe-S cluster assembly factor Nubp2 homolog (259 aa).

14–21 (GKGGVGKS) is a binding site for ATP. Residues cysteine 188 and cysteine 191 each contribute to the [4Fe-4S] cluster site.

This sequence belongs to the Mrp/NBP35 ATP-binding proteins family. NUBP2/CFD1 subfamily. Heterotetramer of 2 Nubp1 and 2 Nubp2 chains. Requires [4Fe-4S] cluster as cofactor.

It is found in the cytoplasm. In terms of biological role, component of the cytosolic iron-sulfur (Fe/S) protein assembly (CIA) machinery. Required for maturation of extramitochondrial Fe-S proteins. The Nubp1-Nubp2 heterotetramer forms a Fe-S scaffold complex, mediating the de novo assembly of an Fe-S cluster and its transfer to target apoproteins. The protein is Cytosolic Fe-S cluster assembly factor Nubp2 homolog of Aedes aegypti (Yellowfever mosquito).